A 111-amino-acid chain; its full sequence is MKFLLGTLVVLATFVTLCNSQCYFIPNQSLKPNECQDLKGVSHPLNSVWKTKDCEECTCGQNAISCCNTAAIPTGYDTNKCQKILNKKTCTYTVVEKKDPGKTCDVTGWVL.

A signal peptide spans 1–20; that stretch reads MKFLLGTLVVLATFVTLCNS. Q21 carries the pyrrolidone carboxylic acid modification. 5 disulfides stabilise this stretch: C22/C67, C35/C59, C54/C90, C57/C66, and C81/C104.

Belongs to the beta-microseminoprotein family. In terms of assembly, homodimer; Interacts with PI16. In terms of tissue distribution, corpora lutea, mostly in the luteal cells surrounding blood vessels.

The protein resides in the secreted. The sequence is that of Beta-microseminoprotein (MSMB) from Sus scrofa (Pig).